An 812-amino-acid chain; its full sequence is DNA gyrase subunit A (812 aa).

The 466-residue stretch at Ile-31–Val-496 folds into the Topo IIA-type catalytic domain. Tyr-119 acts as the O-(5'-phospho-DNA)-tyrosine intermediate in catalysis. The GyrA-box signature appears at Gln-523 to Gly-529.

The protein belongs to the type II topoisomerase GyrA/ParC subunit family. Heterotetramer, composed of two GyrA and two GyrB chains. In the heterotetramer, GyrA contains the active site tyrosine that forms a transient covalent intermediate with DNA, while GyrB binds cofactors and catalyzes ATP hydrolysis.

The protein localises to the cytoplasm. It catalyses the reaction ATP-dependent breakage, passage and rejoining of double-stranded DNA.. In terms of biological role, a type II topoisomerase that negatively supercoils closed circular double-stranded (ds) DNA in an ATP-dependent manner to modulate DNA topology and maintain chromosomes in an underwound state. Negative supercoiling favors strand separation, and DNA replication, transcription, recombination and repair, all of which involve strand separation. Also able to catalyze the interconversion of other topological isomers of dsDNA rings, including catenanes and knotted rings. Type II topoisomerases break and join 2 DNA strands simultaneously in an ATP-dependent manner. The protein is DNA gyrase subunit A of Kosmotoga olearia (strain ATCC BAA-1733 / DSM 21960 / TBF 19.5.1).